A 427-amino-acid polypeptide reads, in one-letter code: Septin-8 (427 aa).

One can recognise a Septin-type G domain in the interval 39-305; the sequence is QGFCFNILCV…ELYRRCKLEE (267 aa). The tract at residues 49 to 56 is G1 motif; it reads GETGIGKS. Residues 49–56, Gly104, 185–193, Gly239, and Arg254 contribute to the GTP site; these read GETGIGKS and KADTISKSE. Positions 101–104 are G3 motif; the sequence is DTVG. The tract at residues 184-187 is G4 motif; it reads AKAD. The stretch at 321 to 409 forms a coiled coil; the sequence is QETYEAKRKE…KAAMEALQSQ (89 aa). Positions 373 to 427 are disordered; it reads RVHQEESKKVEDKRRDLEEEMNSFNRRKAAMEALQSQSFQATSQQPLKKDKDRKN. Residues 374–389 show a composition bias toward basic and acidic residues; the sequence is VHQEESKKVEDKRRDL. Polar residues predominate over residues 406 to 418; it reads LQSQSFQATSQQP.

This sequence belongs to the TRAFAC class TrmE-Era-EngA-EngB-Septin-like GTPase superfamily. Septin GTPase family.

It is found in the cytoplasm. The protein localises to the cytoskeleton. The protein resides in the synapse. Its subcellular location is the cell projection. It localises to the axon. It is found in the cytoplasmic vesicle. The protein localises to the secretory vesicle. The protein resides in the synaptic vesicle membrane. Its subcellular location is the presynapse. This chain is Septin-8, found in Xenopus tropicalis (Western clawed frog).